The chain runs to 322 residues: Ferredoxin--NADP reductase (322 aa).

Residues aspartate 34, glutamine 42, tyrosine 47, valine 87, phenylalanine 120, aspartate 279, and threonine 320 each contribute to the FAD site.

It belongs to the ferredoxin--NADP reductase type 2 family. As to quaternary structure, homodimer. Requires FAD as cofactor.

The catalysed reaction is 2 reduced [2Fe-2S]-[ferredoxin] + NADP(+) + H(+) = 2 oxidized [2Fe-2S]-[ferredoxin] + NADPH. The polypeptide is Ferredoxin--NADP reductase (Streptococcus pneumoniae serotype 2 (strain D39 / NCTC 7466)).